Consider the following 194-residue polypeptide: Recombination protein RecR (194 aa).

The C4-type zinc finger occupies 55–70; sequence CRECGNLAEGELCPIC. Positions 78–171 constitute a Toprim domain; sequence SLLAVVESVA…RVTRPAYGLP (94 aa).

Belongs to the RecR family.

In terms of biological role, may play a role in DNA repair. It seems to be involved in an RecBC-independent recombinational process of DNA repair. It may act with RecF and RecO. This Thermus thermophilus (strain ATCC BAA-163 / DSM 7039 / HB27) protein is Recombination protein RecR.